The chain runs to 252 residues: Triosephosphate isomerase (252 aa).

9–11 (NWK) contacts substrate. The active-site Electrophile is the His95. Glu167 functions as the Proton acceptor in the catalytic mechanism. Residues Gly173, Ser213, and 234 to 235 (GG) each bind substrate.

The protein belongs to the triosephosphate isomerase family. As to quaternary structure, homodimer.

Its subcellular location is the cytoplasm. It carries out the reaction D-glyceraldehyde 3-phosphate = dihydroxyacetone phosphate. It participates in carbohydrate biosynthesis; gluconeogenesis. It functions in the pathway carbohydrate degradation; glycolysis; D-glyceraldehyde 3-phosphate from glycerone phosphate: step 1/1. Its function is as follows. Involved in the gluconeogenesis. Catalyzes stereospecifically the conversion of dihydroxyacetone phosphate (DHAP) to D-glyceraldehyde-3-phosphate (G3P). The chain is Triosephosphate isomerase from Syntrophotalea carbinolica (strain DSM 2380 / NBRC 103641 / GraBd1) (Pelobacter carbinolicus).